A 449-amino-acid chain; its full sequence is NADH-quinone oxidoreductase subunit D (449 aa).

This sequence belongs to the complex I 49 kDa subunit family. In terms of assembly, NDH-1 is composed of 14 different subunits. Subunits NuoB, C, D, E, F, and G constitute the peripheral sector of the complex.

The protein localises to the cell membrane. The catalysed reaction is a quinone + NADH + 5 H(+)(in) = a quinol + NAD(+) + 4 H(+)(out). Functionally, NDH-1 shuttles electrons from NADH, via FMN and iron-sulfur (Fe-S) centers, to quinones in the respiratory chain. The immediate electron acceptor for the enzyme in this species is believed to be a menaquinone. Couples the redox reaction to proton translocation (for every two electrons transferred, four hydrogen ions are translocated across the cytoplasmic membrane), and thus conserves the redox energy in a proton gradient. The polypeptide is NADH-quinone oxidoreductase subunit D (Saccharopolyspora erythraea (strain ATCC 11635 / DSM 40517 / JCM 4748 / NBRC 13426 / NCIMB 8594 / NRRL 2338)).